The sequence spans 179 residues: Inner membrane-spanning protein YciB (179 aa).

Transmembrane regions (helical) follow at residues 3-23 (FLYDLFPVILFFIVYKLFGIY), 49-69 (NALIMSGVIIVVFGGATLWLQ), 76-96 (WKPTILYWVFTVGLLGSQWLF), 119-139 (LNLAWAIFFLLLGFLNLYVAY), and 149-169 (FKLFGTMGLMFVFVIGQTLLL).

This sequence belongs to the YciB family.

The protein resides in the cell inner membrane. In terms of biological role, plays a role in cell envelope biogenesis, maintenance of cell envelope integrity and membrane homeostasis. The polypeptide is Inner membrane-spanning protein YciB (Methylobacillus flagellatus (strain ATCC 51484 / DSM 6875 / VKM B-1610 / KT)).